A 610-amino-acid chain; its full sequence is MTTAAIRGLQGEAPTKNKELLNWIADAVELFQPEAVVFVDGSQAEWDRMAEDLVEAGTLIKLNEEKRPNSYLARSNPSDVARVESRTFICSEKEEDAGPTNNWAPPQAMKDEMSKHYAGSMKGRTMYVVPFCMGPISDPDPKLGVQLTDSEYVVMSMRIMTRMGIEALDKIGANGSFVRCLHSVGAPLEPGQEDVAWPCNDTKYITQFPETKEIWSYGSGYGGNAILAKKCYALRIASVMAREEGWMAEHMLILKLINPEGKAYHIAAAFPSACGKTNLAMITPTIPGWTAQVVGDDIAWLKLREDGLYAVNPENGFFGVAPGTNYASNPIAMKTMEPGNTLFTNVALTDDGDIWWEGMDGDAPAHLIDWMGNDWTPESDENAAHPNSRYCVAIDQSPAAAPEFNDWEGVKIDAILFGGRRADTVPLVTQTYDWEHGTMVGALLASGQTAASAEAKVGTLRHDPMAMLPFIGYNAGEYLQNWIDMGNKGGDKMPSIFLVNWFRRGEDGRFLWPGFGDNSRVLKWVIDRIEGHVGADETVVGHTAKAEDLDLDGLDTPIEDVKEALTAPAEQWANDVEDNAEYLTFLGPRVPAEVHSQFDALKARISAAHA.

Substrate is bound by residues Arg82 and 221-223 (YGG). Mn(2+) is bound by residues Lys230 and His250. Ser272 serves as a coordination point for substrate. A GTP-binding site is contributed by 273 to 278 (ACGKTN). Residue Cys274 is part of the active site. A Mn(2+)-binding site is contributed by Asp297. 387–389 (NSR) contributes to the substrate binding site. Residues Arg389, Arg420, and 515 to 518 (FGDN) contribute to the GTP site.

This sequence belongs to the phosphoenolpyruvate carboxykinase [GTP] family. Monomer. Requires Mn(2+) as cofactor.

It is found in the cytoplasm. It catalyses the reaction oxaloacetate + GTP = phosphoenolpyruvate + GDP + CO2. The protein operates within carbohydrate biosynthesis; gluconeogenesis. Involved in the gluconeogenesis. Catalyzes the conversion of oxaloacetate (OAA) to phosphoenolpyruvate (PEP), the rate-limiting step in the metabolic pathway that produces glucose from lactate and other precursors derived from the citric acid cycle. This Corynebacterium glutamicum (strain ATCC 13032 / DSM 20300 / JCM 1318 / BCRC 11384 / CCUG 27702 / LMG 3730 / NBRC 12168 / NCIMB 10025 / NRRL B-2784 / 534) protein is Phosphoenolpyruvate carboxykinase [GTP].